Reading from the N-terminus, the 29-residue chain is Lambda-theraphotoxin-Ec2b (29 aa).

Disulfide bonds link Cys2–Cys16, Cys9–Cys21, and Cys15–Cys25.

This sequence belongs to the neurotoxin 30 (phrixotoxin) family. Expressed by the venom gland.

The protein resides in the secreted. Insect-selective neurotoxin that potently blocks insect calcium-activated potassium (BKCa) channels (Slo-type) in cockroach dorsal unpaired median (DUM) neurons (IC(50)=25.3 nM). This occurs in the absence of any shifts in the voltage dependence of activation. May interact with the turret and/or loop region of the external entrance to the channel and does not project deeply into the pore of the channel. In vivo, does not show toxicity in mice after intracerebroventricular injection of up to 25 pmol/g (1.8 ug/20 g mouse). The chain is Lambda-theraphotoxin-Ec2b from Eucratoscelus constrictus (African red-rump baboon spider).